A 216-amino-acid chain; its full sequence is Adenylate kinase (216 aa).

Glycine 10–threonine 15 is an ATP binding site. The segment at serine 30–valine 59 is NMP. AMP contacts are provided by residues threonine 31, arginine 36, alanine 57–valine 59, glycine 85–arginine 88, and glutamine 92. Residues glycine 126–aspartate 163 form an LID region. Arginine 127 is an ATP binding site. Zn(2+) contacts are provided by cysteine 130 and cysteine 133. Residue threonine 136 to tyrosine 137 coordinates ATP. 2 residues coordinate Zn(2+): cysteine 150 and cysteine 153. Positions 160 and 171 each coordinate AMP. An ATP-binding site is contributed by glutamine 199.

The protein belongs to the adenylate kinase family. In terms of assembly, monomer.

The protein localises to the cytoplasm. The enzyme catalyses AMP + ATP = 2 ADP. The protein operates within purine metabolism; AMP biosynthesis via salvage pathway; AMP from ADP: step 1/1. Functionally, catalyzes the reversible transfer of the terminal phosphate group between ATP and AMP. Plays an important role in cellular energy homeostasis and in adenine nucleotide metabolism. The chain is Adenylate kinase from Bacillus anthracis (strain A0248).